A 431-amino-acid chain; its full sequence is Glutamate-1-semialdehyde 2,1-aminomutase (431 aa).

Lys-269 carries the post-translational modification N6-(pyridoxal phosphate)lysine.

Belongs to the class-III pyridoxal-phosphate-dependent aminotransferase family. HemL subfamily. In terms of assembly, homodimer. Pyridoxal 5'-phosphate serves as cofactor.

The protein resides in the cytoplasm. It carries out the reaction (S)-4-amino-5-oxopentanoate = 5-aminolevulinate. The protein operates within porphyrin-containing compound metabolism; protoporphyrin-IX biosynthesis; 5-aminolevulinate from L-glutamyl-tRNA(Glu): step 2/2. The chain is Glutamate-1-semialdehyde 2,1-aminomutase from Francisella tularensis subsp. tularensis (strain WY96-3418).